Here is a 198-residue protein sequence, read N- to C-terminus: NAD(P)H dehydrogenase (quinone) (198 aa).

The Flavodoxin-like domain maps to 4-189 (ILVLYYSMYG…SIARYQGEYV (186 aa)). Residues 10 to 15 (SMYGHI) and 78 to 80 (TRF) contribute to the FMN site. NAD(+) is bound at residue Y12. Position 98 (W98) interacts with substrate. Residues 113 to 118 (STGTGG) and H133 each bind FMN.

The protein belongs to the WrbA family. FMN is required as a cofactor.

It carries out the reaction a quinone + NADH + H(+) = a quinol + NAD(+). The enzyme catalyses a quinone + NADPH + H(+) = a quinol + NADP(+). The sequence is that of NAD(P)H dehydrogenase (quinone) from Salmonella typhi.